The chain runs to 165 residues: Disulfide bond formation protein B (165 aa).

Residues 1 to 16 are Cytoplasmic-facing; the sequence is MTILNSLNQFSKGRLS. The helical transmembrane segment at 17-33 threads the bilayer; sequence WLLLLLFVVFFEACALY. Residues 34–51 lie on the Periplasmic side of the membrane; the sequence is FQHVMMLAPCVMCIYERV. The cysteines at positions 43 and 46 are disulfide-linked. The helical transmembrane segment at 52-67 threads the bilayer; that stretch reads AMMGVGVAAIVGLMAP. Residues 68 to 74 are Cytoplasmic-facing; the sequence is NNPIFRW. The chain crosses the membrane as a helical span at residues 75–92; that stretch reads LGLIGWGLSSYKGLLLAQ. Topologically, residues 93 to 147 are periplasmic; that stretch reads QHVDYQFNPSPFATCDLFVTFPSWRPLNQWAPWIFEAYGDCSKIVWQFLDLSMPQ. Cysteine 107 and cysteine 133 are disulfide-bonded. The helical transmembrane segment at 148-165 threads the bilayer; it reads WLVVIFAGNLIALALIVI.

Belongs to the DsbB family.

The protein resides in the cell inner membrane. In terms of biological role, required for disulfide bond formation in some periplasmic proteins. Acts by oxidizing the DsbA protein. The protein is Disulfide bond formation protein B of Vibrio alginolyticus.